The chain runs to 1955 residues: Callose synthase 3 (1955 aa).

Over 1–488 the chain is Cytoplasmic; the sequence is MSATRGGPDQ…FWHVFRSFDR (488 aa). A helical transmembrane segment spans residues 489-509; the sequence is MWSFYILCLQAMIIMAWDGGQ. Residues 510–521 lie on the Extracellular side of the membrane; sequence PSSVFGADVFKK. A helical membrane pass occupies residues 522-542; that stretch reads VLSVFITAAIMKLGQAVLDVI. Residues 543–558 lie on the Cytoplasmic side of the membrane; sequence LNFKAHQSMTLHVKLR. The helical transmembrane segment at 559–579 threads the bilayer; sequence YILKVFSAAAWVIILPVTYAY. The Extracellular segment spans residues 580–604; it reads SWKDPPAFARTIKSWFGSAMHSPSL. A helical membrane pass occupies residues 605–625; sequence FIIAVVSYLSPNMLAGVMFLF. At 626 to 660 the chain is on the cytoplasmic side; that stretch reads PLLRRFLERSNYRIVMLMMWWSQPRLYVGRGMHES. A helical transmembrane segment spans residues 661–681; it reads AFSLFKYTMFWVLLIATKLAF. Residues 682 to 717 are Extracellular-facing; sequence SYYIEIRPLVAPTQAIMKARVTNFQWHEFFPRAKNN. Residues 718–738 traverse the membrane as a helical segment; sequence IGVVIALWAPIILVYFMDSQI. Over 739–1517 the chain is Cytoplasmic; sequence WYAIFSTLFG…FDFFRMMSCY (779 aa). A helical transmembrane segment spans residues 1518-1538; the sequence is FTTVGFYFSTLITVLTVYIFL. At 1539-1566 the chain is on the extracellular side; sequence YGRLYLVLSGLEQGLSTQKGIRDNTPLQ. A helical transmembrane segment spans residues 1567–1587; it reads IALASQSFVQIGFLMALPMLM. The Cytoplasmic segment spans residues 1588 to 1597; the sequence is EIGLERGFRT. A helical membrane pass occupies residues 1598 to 1618; sequence ALSEFVLMQLQLAPVFFTFSL. The Extracellular portion of the chain corresponds to 1619–1661; sequence GTKTHYYGRTLLHGGAKYRSTGRGFVVFHAKFADNYRLYSRSH. A helical transmembrane segment spans residues 1662-1682; that stretch reads FVKGLEMMLLLVVYQIFGSAY. The Cytoplasmic segment spans residues 1683–1688; it reads RGVLAY. The chain crosses the membrane as a helical span at residues 1689–1709; sequence LLITISMWFMVGTWLFAPFLF. The Extracellular portion of the chain corresponds to 1710–1761; sequence NPSGFEWQKIVDDWTDWNKWINNIGGIGVPAEKSWESWWEEEQEHLRYSGKR. A helical transmembrane segment spans residues 1762–1782; that stretch reads GIVVEILLALRFFIYQYGLVY. The Cytoplasmic segment spans residues 1783–1792; sequence HLTITEKTKN. The helical transmembrane segment at 1793-1813 threads the bilayer; that stretch reads FLVYGVSWLVIFLILFVMKTV. The Extracellular portion of the chain corresponds to 1814–1833; that stretch reads SVGRRRFSASFQLMFRLIKG. Residues 1834-1854 traverse the membrane as a helical segment; it reads LIFMTFIAIIVILITLAHMTI. The Cytoplasmic portion of the chain corresponds to 1855 to 1856; sequence QD. A helical membrane pass occupies residues 1857–1877; sequence IIVCILAFMPTGWGMLLIAQA. Residues 1878–1899 lie on the Extracellular side of the membrane; sequence CKPVVHRAGFWGSVRTLARGYE. A helical membrane pass occupies residues 1900-1920; the sequence is IVMGLLLFTPVAFLAWFPFVS. Topologically, residues 1921 to 1955 are cytoplasmic; the sequence is EFQTRMLFNQAFSRGLQISRILGGHRKDRSSRNKE.

This sequence belongs to the glycosyltransferase 48 family.

The protein localises to the cell membrane. It carries out the reaction [(1-&gt;3)-beta-D-glucosyl](n) + UDP-alpha-D-glucose = [(1-&gt;3)-beta-D-glucosyl](n+1) + UDP + H(+). In terms of biological role, involved in callose synthesis at the forming cell plate during cytokinesis. During plant growth and development, callose is found as a transitory component of the cell plate in dividing cells, is a major component of pollen mother cell walls and pollen tubes, and is found as a structural component of plasmodesmatal canals. This is Callose synthase 3 (CALS3) from Arabidopsis thaliana (Mouse-ear cress).